The chain runs to 397 residues: Cercosporin biosynthesis regulatory protein CTB8 (397 aa).

Positions 26-53 form a DNA-binding region, zn(2)-C6 fungal-type; that stretch reads CTHCSSQKIRCTKERPACARCVNKGLLC. Disordered regions lie at residues 62-92 and 173-198; these read GTRR…DSVK and AEAS…ATTH. Positions 74-87 are enriched in polar residues; the sequence is PETTISNAPTSSVP. A compositionally biased stretch (low complexity) spans 179-197; that stretch reads PSSSSSPPSQRSDGGRATT.

The protein resides in the nucleus. Functionally, transcription regulator of the gene cluster that mediates the biosynthesis of cercosporin, a light-activated, non-host-selective toxin. The perylenequinone chromophore of cercosporin absorbs light energy to attain an electronically-activated triplet state and produces active oxygen species such as the hydroxyl radical, superoxide, hydrogen peroxide or singlet oxygen upon reaction with oxygen molecules. These reactive oxygen species cause damage to various cellular components including lipids, proteins and nucleic acids. This chain is Cercosporin biosynthesis regulatory protein CTB8, found in Cercospora nicotianae (Barn spot disease fungus).